We begin with the raw amino-acid sequence, 167 residues long: NAD(P)H-quinone oxidoreductase subunit I, chloroplastic (167 aa).

4Fe-4S ferredoxin-type domains follow at residues 55–84 (GRIH…VDWK) and 95–124 (LNYS…MTEE). [4Fe-4S] cluster is bound by residues Cys64, Cys67, Cys70, Cys74, Cys104, Cys107, Cys110, and Cys114.

This sequence belongs to the complex I 23 kDa subunit family. NDH is composed of at least 16 different subunits, 5 of which are encoded in the nucleus. [4Fe-4S] cluster is required as a cofactor.

It is found in the plastid. The protein localises to the chloroplast thylakoid membrane. The enzyme catalyses a plastoquinone + NADH + (n+1) H(+)(in) = a plastoquinol + NAD(+) + n H(+)(out). It catalyses the reaction a plastoquinone + NADPH + (n+1) H(+)(in) = a plastoquinol + NADP(+) + n H(+)(out). NDH shuttles electrons from NAD(P)H:plastoquinone, via FMN and iron-sulfur (Fe-S) centers, to quinones in the photosynthetic chain and possibly in a chloroplast respiratory chain. The immediate electron acceptor for the enzyme in this species is believed to be plastoquinone. Couples the redox reaction to proton translocation, and thus conserves the redox energy in a proton gradient. The polypeptide is NAD(P)H-quinone oxidoreductase subunit I, chloroplastic (Jasminum nudiflorum (Winter jasmine)).